The chain runs to 299 residues: CCR4-NOT transcription complex subunit 9 (299 aa).

At methionine 1 the chain carries N-acetylmethionine.

It belongs to the CNOT9 family. As to quaternary structure, homodimer. Component of the CCR4-NOT complex; distinct complexes seem to exist that differ in the participation of probably mutually exclusive catalytic subunits. Interacts with MYB, ATF2, RARA, RARB, RARG, RXRA, RXRB and RXRG. Identified in a complex with ATF2 bound to target DNA. Interacts with NANOS2. Directly interacts with ZNF335. As to expression, detected in spleen, thymus, prostate, testis, ovary and intestine.

Its subcellular location is the nucleus. It is found in the cytoplasm. It localises to the P-body. In terms of biological role, component of the CCR4-NOT complex which is one of the major cellular mRNA deadenylases and is linked to various cellular processes including bulk mRNA degradation, miRNA-mediated repression, translational repression during translational initiation and general transcription regulation. Additional complex functions may be a consequence of its influence on mRNA expression. Involved in down-regulation of MYB- and JUN-dependent transcription. May play a role in cell differentiation. Can bind oligonucleotides, such as poly-G, poly-C or poly-T (in vitro), but the physiological relevance of this is not certain. Does not bind poly-A. Enhances ligand-dependent transcriptional activity of nuclear hormone receptors, including RARA, expect ESR1-mediated transcription that is not only slightly increased, if at all. This Homo sapiens (Human) protein is CCR4-NOT transcription complex subunit 9.